An 87-amino-acid chain; its full sequence is Small ribosomal subunit protein bS20 (87 aa).

The interval 1-26 (MANIKSAKKRAIQAEKARKHNASRRS) is disordered.

Belongs to the bacterial ribosomal protein bS20 family.

In terms of biological role, binds directly to 16S ribosomal RNA. This chain is Small ribosomal subunit protein bS20, found in Tolumonas auensis (strain DSM 9187 / NBRC 110442 / TA 4).